Reading from the N-terminus, the 366-residue chain is Protein BIG GRAIN 1-like B (366 aa).

Disordered regions lie at residues 42–73 and 129–148; these read DSST…DFNR and FERS…EHGS. The segment covering 56–73 has biased composition (basic and acidic residues); sequence QNREDTRVSANRRDDFNR.

It belongs to the BIG GRAIN 1 (BG1) plant protein family.

It localises to the cell membrane. Involved in auxin transport. Regulator of the auxin signaling pathway. The sequence is that of Protein BIG GRAIN 1-like B from Arabidopsis thaliana (Mouse-ear cress).